The following is a 191-amino-acid chain: Tellurium resistance protein TerE (191 aa).

Belongs to the CAPAB/TerDEXZ family.

In terms of biological role, not known; seems to contribute to the tellurium resistance (Ter) mechanism. Also involved in phage inhibition (Phi) and colicin resistance (PacB). The chain is Tellurium resistance protein TerE (terE) from Serratia marcescens.